Reading from the N-terminus, the 69-residue chain is MAVPKKRTSKSKRKIRKTVWREKANKAAKKAFSLARLILSGRSKSFCYTVNNKSSESSESTSIDESDDS.

This sequence belongs to the bacterial ribosomal protein bL32 family.

The protein resides in the plastid. The protein localises to the chloroplast. This is Large ribosomal subunit protein bL32c (rpl32) from Anthoceros angustus (Hornwort).